The sequence spans 801 residues: Xaa-Pro dipeptidyl-peptidase (801 aa).

Residues S371, D491, and H522 each act as charge relay system in the active site.

The protein belongs to the peptidase S15 family. Homodimer.

Its subcellular location is the cytoplasm. It catalyses the reaction Hydrolyzes Xaa-Pro-|- bonds to release unblocked, N-terminal dipeptides from substrates including Ala-Pro-|-p-nitroanilide and (sequentially) Tyr-Pro-|-Phe-Pro-|-Gly-Pro-|-Ile.. Removes N-terminal dipeptides sequentially from polypeptides having unsubstituted N-termini provided that the penultimate residue is proline. The polypeptide is Xaa-Pro dipeptidyl-peptidase (Ligilactobacillus salivarius (strain UCC118) (Lactobacillus salivarius)).